Reading from the N-terminus, the 351-residue chain is Histidinol-phosphate aminotransferase (351 aa).

Residue K221 is modified to N6-(pyridoxal phosphate)lysine.

It belongs to the class-II pyridoxal-phosphate-dependent aminotransferase family. Histidinol-phosphate aminotransferase subfamily. In terms of assembly, homodimer. It depends on pyridoxal 5'-phosphate as a cofactor.

The enzyme catalyses L-histidinol phosphate + 2-oxoglutarate = 3-(imidazol-4-yl)-2-oxopropyl phosphate + L-glutamate. It functions in the pathway amino-acid biosynthesis; L-histidine biosynthesis; L-histidine from 5-phospho-alpha-D-ribose 1-diphosphate: step 7/9. This is Histidinol-phosphate aminotransferase from Staphylococcus epidermidis (strain ATCC 35984 / DSM 28319 / BCRC 17069 / CCUG 31568 / BM 3577 / RP62A).